The following is an 806-amino-acid chain: Lon protease (806 aa).

A Lon N-terminal domain is found at 14–207 (YPVLPLRDIV…KALGFMEGEI (194 aa)). Residue 359 to 366 (GPPGVGKT) participates in ATP binding. The Lon proteolytic domain maps to 594–775 (DDQVGVVTGL…GEVIAHALLR (182 aa)). Active-site residues include serine 681 and lysine 724. The segment at 786-806 (SQPAALPSVDSQDEAGTSIAH) is disordered.

It belongs to the peptidase S16 family. As to quaternary structure, homohexamer. Organized in a ring with a central cavity.

It localises to the cytoplasm. It carries out the reaction Hydrolysis of proteins in presence of ATP.. In terms of biological role, ATP-dependent serine protease that mediates the selective degradation of mutant and abnormal proteins as well as certain short-lived regulatory proteins. Required for cellular homeostasis and for survival from DNA damage and developmental changes induced by stress. Degrades polypeptides processively to yield small peptide fragments that are 5 to 10 amino acids long. Binds to DNA in a double-stranded, site-specific manner. In R.meliloti it is important for controlling the turnover of a constitutively expressed protein(s) that, when unregulated, disrupts normal nodule formation and normal growth. The protein is Lon protease of Rhizobium meliloti (strain 1021) (Ensifer meliloti).